The primary structure comprises 132 residues: UPF0102 protein LI0223 (132 aa).

It belongs to the UPF0102 family.

The protein is UPF0102 protein LI0223 of Lawsonia intracellularis (strain PHE/MN1-00).